The primary structure comprises 932 residues: Progesterone receptor (932 aa).

Residues 1-164 (MTELKAKGPR…PATQGVLSPL (164 aa)) form an AF3; mediates transcriptional activation region. The interval 1–254 (MTELKAKGPR…GGAAAGGAAA (254 aa)) is disordered. Residues 1 to 565 (MTELKAKGPR…YSFESLPQKI (565 aa)) form a modulating, Pro-Rich region. Serine 20 is subject to Phosphoserine. Positions 55 to 59 (LDGLL) match the LXXL motif 1 motif. Serine 81 is subject to Phosphoserine. The span at 88–103 (SRAEATRGAGGSSSSP) shows a compositional bias: low complexity. Residues 115–119 (LDTLL) carry the LXXL motif 2 motif. 2 positions are modified to phosphoserine: serine 130 and serine 162. The tract at residues 165 to 304 (MSRSGGKAGD…LATTVMDFIH (140 aa)) is mediates transcriptional transrepression. Residues 183-187 (KVLPQ) carry the Nuclear localization signal motif. 2 positions are modified to phosphoserine: serine 190 and serine 213. Positions 220-231 (EVEEEDGSESED) are enriched in acidic residues. A compositionally biased stretch (low complexity) spans 232-254 (SAGPLLKGKPRALGGAAAGGAAA). Serine 293 is subject to Phosphoserine; by MAPK1. The span at 334–349 (AASAFAPPRSSPSASS) shows a compositional bias: low complexity. The segment at 334–356 (AASAFAPPRSSPSASSTPVAVGD) is disordered. Serine 344 is subject to Phosphoserine; by MAPK. A Glycyl lysine isopeptide (Lys-Gly) (interchain with G-Cter in SUMO); alternate cross-link involves residue lysine 387. A Glycyl lysine isopeptide (Lys-Gly) (interchain with G-Cter in ubiquitin); alternate cross-link involves residue lysine 387. Disordered regions lie at residues 414–451 (PDFPLGPPPPLPPRAPPSRPGEAAVTAAPASASVSSAS) and 468–499 (PPQQGPFAPPPSKAPGAGGCLPPRDGLPSTAA). Positions 417 to 432 (PLGPPPPLPPRAPPSR) are enriched in pro residues. Residues 433 to 451 (PGEAAVTAAPASASVSSAS) are compositionally biased toward low complexity. The AF1; mediates transcriptional activation stretch occupies residues 455–545 (STLECILYKA…VYPPYLNYLR (91 aa)). The segment covering 470–480 (QQGPFAPPPSK) has biased composition (pro residues). Lysine 530 is covalently cross-linked (Glycyl lysine isopeptide (Lys-Gly) (interchain with G-Cter in SUMO)). 2 NR C4-type zinc fingers span residues 566–586 (CLICGDEASGCHYGVLTCGSC) and 602–626 (CAGRNDCIVDKIRRKNCPACRLRKC). Positions 566-638 (CLICGDEASG…AGMVLGGRKF (73 aa)) form a DNA-binding region, nuclear receptor. Residue serine 675 is modified to Phosphoserine. The NR LBD domain maps to 678–912 (QDIQLIPPLI…EFPEMMSEVI (235 aa)). The interval 686–932 (LINLLMSIEP…MVKPLLFHKK (247 aa)) is AF2; mediates transcriptional activation. Arginine 765 provides a ligand contact to progesterone.

This sequence belongs to the nuclear hormone receptor family. In terms of assembly, interacts with SMARD1 and UNC45A. Interacts with CUEDC2; the interaction promotes ubiquitination, decreases sumoylation, and represses transcriptional activity. Interacts with PIAS3; the interaction promotes sumoylation of PR in a hormone-dependent manner, inhibits DNA-binding, and alters nuclear export. Interacts with SP1; the interaction requires ligand-induced phosphorylation on Ser-344 by ERK1/2-MAPK. Interacts with PRMT2. Interacts with NCOA2 and NCOA1. Interacts with KLF9. Interacts with GTF2B. Post-translationally, phosphorylated on multiple serine sites. Several of these sites are hormone-dependent. Phosphorylation on Ser-293 is highly hormone-dependent and modulates ubiquitination and sumoylation on Lys-387. Phosphorylation on Ser-102 and Ser-344 also requires induction by hormone. Basal phosphorylation on Ser-81, Ser-162 and Ser-190 is increased in response to progesterone and can be phosphorylated in vitro by the CDK2-A1 complex. Phosphorylation at Ser-162 and Ser-293, but not at Ser-190, is impaired during the G(2)/M phase of the cell cycle. Phosphorylation on Ser-344 by ERK1/2 MAPK is required for interaction with SP1. In terms of processing, sumoylation is hormone-dependent and represses transcriptional activity. Sumoylation on all three sites is enhanced by PIAS3. Desumoylated by SENP1. Sumoylation on Lys-387, the main site of sumoylation, is repressed by ubiquitination on the same site, and modulated by phosphorylation at Ser-293. Ubiquitination is hormone-dependent and represses sumoylation on the same site. Promoted by MAPK-mediated phosphorylation on Ser-293. Ubiquitinated by UBR5, leading to its degradation: UBR5 specifically recognizes and binds ligand-bound PGR when it is not associated with coactivators (NCOAs). In presence of NCOAs, the UBR5-degron is not accessible, preventing its ubiquitination and degradation. Post-translationally, palmitoylated by ZDHHC7 and ZDHHC21. Palmitoylation is required for plasma membrane targeting and for rapid intracellular signaling via ERK and AKT kinases and cAMP generation.

It localises to the nucleus. It is found in the cytoplasm. Its function is as follows. The steroid hormones and their receptors are involved in the regulation of eukaryotic gene expression and affect cellular proliferation and differentiation in target tissues. Transcriptional activator of several progesteron-dependent promoters in a variety of cell types. Involved in activation of SRC-dependent MAPK signaling on hormone stimulation. The chain is Progesterone receptor (PGR) from Hylobates lar (Lar gibbon).